The primary structure comprises 126 residues: Large ribosomal subunit protein eL18 (126 aa).

It belongs to the eukaryotic ribosomal protein eL18 family.

This Methanosarcina acetivorans (strain ATCC 35395 / DSM 2834 / JCM 12185 / C2A) protein is Large ribosomal subunit protein eL18.